A 595-amino-acid chain; its full sequence is Aspartate--tRNA(Asp/Asn) ligase (595 aa).

E178 serves as a coordination point for L-aspartate. Positions 202–205 are aspartate; the sequence is QIFK. Position 224 (R224) interacts with L-aspartate. ATP contacts are provided by residues 224-226 and Q233; that span reads RDE. H458 contacts L-aspartate. An ATP-binding site is contributed by E488. Position 495 (R495) interacts with L-aspartate. Residue 540–543 coordinates ATP; the sequence is GIDR.

This sequence belongs to the class-II aminoacyl-tRNA synthetase family. Type 1 subfamily. In terms of assembly, homodimer.

It localises to the cytoplasm. The enzyme catalyses tRNA(Asx) + L-aspartate + ATP = L-aspartyl-tRNA(Asx) + AMP + diphosphate. Aspartyl-tRNA synthetase with relaxed tRNA specificity since it is able to aspartylate not only its cognate tRNA(Asp) but also tRNA(Asn). Reaction proceeds in two steps: L-aspartate is first activated by ATP to form Asp-AMP and then transferred to the acceptor end of tRNA(Asp/Asn). The sequence is that of Aspartate--tRNA(Asp/Asn) ligase from Acaryochloris marina (strain MBIC 11017).